The chain runs to 33 residues: Photosystem II reaction center protein Psb30 (33 aa).

Residues Leu-5–Leu-25 form a helical membrane-spanning segment.

This sequence belongs to the Psb30/Ycf12 family. PSII is composed of 1 copy each of membrane proteins PsbA, PsbB, PsbC, PsbD, PsbE, PsbF, PsbH, PsbI, PsbJ, PsbK, PsbL, PsbM, PsbT, PsbX, PsbY, PsbZ, Psb30/Ycf12, peripheral proteins of the oxygen-evolving complex and a large number of cofactors. It forms dimeric complexes.

Its subcellular location is the plastid. The protein resides in the chloroplast thylakoid membrane. Its function is as follows. A core subunit of photosystem II (PSII), probably helps stabilize the reaction center. The sequence is that of Photosystem II reaction center protein Psb30 from Lepocinclis buetschlii.